We begin with the raw amino-acid sequence, 459 residues long: Exodeoxyribonuclease 7 large subunit (459 aa).

It belongs to the XseA family. Heterooligomer composed of large and small subunits.

The protein localises to the cytoplasm. The catalysed reaction is Exonucleolytic cleavage in either 5'- to 3'- or 3'- to 5'-direction to yield nucleoside 5'-phosphates.. Its function is as follows. Bidirectionally degrades single-stranded DNA into large acid-insoluble oligonucleotides, which are then degraded further into small acid-soluble oligonucleotides. The chain is Exodeoxyribonuclease 7 large subunit from Pseudomonas syringae pv. tomato (strain ATCC BAA-871 / DC3000).